Reading from the N-terminus, the 2603-residue chain is Ankyrin repeat domain-containing protein 17 (2603 aa).

Position 1 is an N-acetylmethionine (methionine 1). Low complexity-rich tracts occupy residues 1 to 34 and 42 to 53; these read MEKA…AAAE and SSRARSASSPRG. The segment at 1 to 143 is disordered; sequence MEKATVPVAA…SFILDQDDLE (143 aa). Residues serine 19 and serine 50 each carry the phosphoserine modification. The span at 63–79 shows a compositional bias: basic residues; the sequence is KKKPPQQQHHKAKRNRT. Residues 84–94 are compositionally biased toward low complexity; the sequence is SSSESSSDSDN. Over residues 95 to 111 the composition is skewed to gly residues; sequence SGGGGGGGGGGGGGGGT. Positions 116 to 131 are enriched in acidic residues; sequence SEEEEDDDDEEEEVSE. Serine 156 carries the post-translational modification Phosphoserine. ANK repeat units follow at residues 233–262, 266–295, 300–329, 333–362, 366–395, 400–429, 433–462, 466–495, 499–528, 533–562, 563–592, 596–625, 629–658, 663–692, and 696–725; these read SDNR…SVNE, EGES…NVED, GDIT…DVNA, TGNT…SIED, NGHT…GINT, FKES…DQEH, EMHT…QVNM, SFES…SLEE, EGYT…NINA, TQET…DIEL, GCST…NVHA, TGDT…DLEH, GGRT…NVNR, NDHT…DPTH, and DGST…NLLS. Lysine 318 is covalently cross-linked (Glycyl lysine isopeptide (Lys-Gly) (interchain with G-Cter in SUMO2)). Position 803 is a phosphoserine (serine 803). ANK repeat units lie at residues 1082–1111, 1115–1144, 1149–1178, 1182–1211, 1217–1246, 1251–1280, 1284–1313, 1319–1348, 1352–1381, and 1385–1414; these read NHDT…SIEH, KGFT…DIEA, TKDT…NKEH, SDYT…EINS, LGIS…DINA, NRNT…NVEH, TGLT…DVNA, SRDT…HIDV, KGNT…DVDA, and RKIT…QFPS. Residues 1442-1526 are a coiled coil; sequence VQAKDRQAAE…EKEKLKVEDE (85 aa). Position 1457 is a phosphoserine (serine 1457). Disordered regions lie at residues 1479–1500 and 1517–1717; these read AKRE…RKLE and EKEK…QKRE. The span at 1481–1491 shows a compositional bias: basic residues; the sequence is REKRKEKRRKK. Composition is skewed to low complexity over residues 1531-1550, 1602-1611, and 1620-1632; these read TEPP…TWTT, ESKSSSTSES, and SSCS…SNSS. Residues serine 1635 and serine 1639 each carry the phosphoserine modification. Composition is skewed to polar residues over residues 1642-1652 and 1675-1703; these read VVTTTVSSKKQ and LSET…SPNG. A phosphoserine mark is found at serine 1696, serine 1700, and serine 1709. Residues 1725–1789 enclose the KH domain; it reads RRSKKVSVPS…ESTRQATQLI (65 aa). Arginine 1874 carries the post-translational modification Asymmetric dimethylarginine. 3 disordered regions span residues 1906–1995, 2011–2192, and 2273–2332; these read PRLP…PSVR, TTVT…HKNS, and VVSS…YGSV. Low complexity-rich tracts occupy residues 1950–1995 and 2011–2028; these read SNQN…PSVR and TTVT…TNAT. Phosphoserine is present on residues serine 2042, serine 2044, serine 2045, serine 2047, serine 2059, and serine 2067. Positions 2066–2078 are enriched in polar residues; sequence ASPNKVASSSEQE. Residues 2095-2106 are compositionally biased toward low complexity; the sequence is SSSSSGSSSAHS. 2 stretches are compositionally biased toward polar residues: residues 2107–2127 and 2273–2303; these read NQQQ…QQSQ and VVSS…SDTS. Over residues 2308-2318 the composition is skewed to pro residues; it reads FRPPLQRPAPS. Residues serine 2373 and serine 2401 each carry the phosphoserine modification. Positions 2381 to 2423 are disordered; it reads CSSASNDSSAQSVSSGVRAPSPAPSSVPLGSEKPSNVSQDRKV. Positions 2382-2411 are enriched in low complexity; sequence SSASNDSSAQSVSSGVRAPSPAPSSVPLGS.

As to quaternary structure, interacts (via N-terminus) with NOD2. Interacts with CDK2, MCM3, MCM5, MCM7, CDC6 and PCNA. Interacts with MAVS and IFIH1. Interacts (via the second ankyrin repeat cluster) with DDX58. In terms of assembly, (Microbial infection) Interacts with enterovirus 71/EV71 capsid protein VP1. Phosphorylated by CDK2. Ubiquitously expressed.

The protein resides in the cytoplasm. The protein localises to the nucleus. In terms of biological role, could play pivotal roles in cell cycle and DNA regulation. Involved in innate immune defense against viruse by positively regulating the viral dsRNA receptors DDX58 and IFIH1 signaling pathways. Involves in NOD2- and NOD1-mediated responses to bacteria suggesting a role in innate antibacterial immune pathways too. Target of enterovirus 71 which is the major etiological agent of HFMD (hand, foot and mouth disease). Could play a central role for the formation and/or maintenance of the blood vessels of the circulation system. The protein is Ankyrin repeat domain-containing protein 17 (ANKRD17) of Homo sapiens (Human).